Reading from the N-terminus, the 518-residue chain is MLGQVLLTVESYQWVSTPQALVAVAVLLSLIAYRLRGRQSELQVYNPKKWWELTTMRARQDFDTYGPSWIEAWFSKNDKPLRFIVDSGYCTILPSSMADEFRKIKDMCMYKFLADDFHSHLPGFDGFKEICQDAHLVNKVVLNQLQTQAPKYTKPLATLADATIAKLFGKSEEWQTAPVYSNGLDLVTRTVTLIMVGDKICHNEEWLDIAKNHAVSVAVQARQLRVWPMLLRPLAHWFQPQGRKLRDQVRRARKIIDPEIQRRRAEKAACVAKGVQPPQYVDTMQWFEDTADGRWYDVAGAQLAMDFAGIYASTDLFVGALVDIARHPDLIQPLRQEIRTVIGEGGWTPASLFKLKLLDSCMKETQRIKPVECATMRSTALRDITLSNGLFIPKGELAAVAADRMNNPDVWENPENYDPYRFMRMREDPDKAFTAQLENTNGDHIGFGWNPRACPGRFFASKEIKILLAHILIQYDVKPVPGDDDKYYRHAFSVRMHPTTKLMVRRRNEDIPLPHDRC.

Topologically, residues 1–31 (MLGQVLLTVESYQWVSTPQALVAVAVLLSLI) are cytoplasmic. Residues 32-48 (AYRLRGRQSELQVYNPK) traverse the membrane as a helical; Signal-anchor for type II membrane protein segment. The Lumenal portion of the chain corresponds to 49-518 (KWWELTTMRA…EDIPLPHDRC (470 aa)). C454 provides a ligand contact to heme.

The protein belongs to the cytochrome P450 family. Heme serves as cofactor.

It is found in the endoplasmic reticulum membrane. It carries out the reaction dihydro-ML-236C carboxylate + reduced [NADPH--hemoprotein reductase] + O2 = ML-236C carboxylate + oxidized [NADPH--hemoprotein reductase] + 2 H2O + H(+). It catalyses the reaction ML-236C carboxylate + reduced [NADPH--hemoprotein reductase] + O2 = ML-236A carboxylate + oxidized [NADPH--hemoprotein reductase] + H2O + H(+). It functions in the pathway polyketide biosynthesis. Dihydro-ML-236C carboxylate monooxygenase; part of the gene cluster that mediates the biosynthesis of compactin, also known as mevastatin or ML-236B, and which acts as a potent competitive inhibitor of HMG-CoA reductase. Compactin biosynthesis is performed in two stages. The first stage is catalyzed by the nonaketide synthase mlcA, which belongs to type I polyketide synthases and catalyzes the iterative nine-step formation of the polyketide. This PKS stage is completed by the action of dehydrogenase mlcG, which catalyzes the NADPH-dependent reduction of the unsaturated tetra-, penta- and heptaketide intermediates that arise during the mlcA-mediated biosynthesis of the nonaketide chain and leads to dihydro-ML-236C carboxylate. Covalently bound dihydro-ML-236C carboxylate is released from mlcA by the mlcF esterase. Conversion of dihydro-ML-236C carboxylate into ML-236A carboxylate is subsequently performed with the participation of molecular oxygen and P450 monoogygenase mlcC. Finally, mlcH performs the conversion of ML-236A carboxylate to ML-236B/compactin carboxylate through the addition of the side-chain diketide moiety produced by the diketide synthase mlcB. The protein is Dihydro-ML-236C monooxygenase mlcC of Penicillium citrinum.